Consider the following 229-residue polypeptide: Orotate phosphoribosyltransferase (229 aa).

Residues Arg107, Lys108, Lys111, His113, and 133–141 (EDLTTAGGS) each bind 5-phospho-alpha-D-ribose 1-diphosphate. Thr137 lines the orotate pocket.

Belongs to the purine/pyrimidine phosphoribosyltransferase family. PyrE subfamily. Homodimer. It depends on Mg(2+) as a cofactor.

It catalyses the reaction orotidine 5'-phosphate + diphosphate = orotate + 5-phospho-alpha-D-ribose 1-diphosphate. Its pathway is pyrimidine metabolism; UMP biosynthesis via de novo pathway; UMP from orotate: step 1/2. In terms of biological role, catalyzes the transfer of a ribosyl phosphate group from 5-phosphoribose 1-diphosphate to orotate, leading to the formation of orotidine monophosphate (OMP). The protein is Orotate phosphoribosyltransferase of Rhizobium etli (strain ATCC 51251 / DSM 11541 / JCM 21823 / NBRC 15573 / CFN 42).